The sequence spans 627 residues: MAAAELTAPAQGIVTFEDVAVYFSWKEWGLLDEAQKCLYHDVMLENLTLTTSLGGSGAGDEEAPYQQSTSPQRVSQVRIPKALPSPQKTNPCEICGPVLRQILHLVEHQGTHHGQKLYTDGACRKQLQFTAYLHQHQKQHVGQKHFRSNGGRDMFLSSCTFEVSGKPFTCKEVGKDFLVRSRFLQQQAAHTRKKSNRTKSAVAFHSVKNHYNWGECVKAFSYKHVRVQHQGDLIRERSYMCSECGKSFSTSCSLSDHLRVHTSEKPYTCGECGKSYRQSSSLITHRRIHTGVRPHQCDECGKLFNRKYDLLIHQRVHTGERPYKCSECGKSFSHSSSLITHQRIHTGMRPYECSECGKSFIHSSSLITHQRVHTGTRPYMCSECGKSFSQSCHLIKHRRLHIGEGPYECSECGKLFTYRSRFFQHQRVHTGVRSHECHECGKLFSRKFDLIVHERVHTGERPYECSECGKSFTCKSYLISHWKVHTGARPYECGECGKSFTHSSTLLQHQRVHTGERPYECNECGKFFSQSSSLIRHRRSHTGERPYECSECWKSFSNHSSLVKHRRVHTGERPYECSECGKSFSQSSNLTNHQRIHSGERPYECSDCGKFFTFNSNLLKHQNVHKG.

Residues 14–96 enclose the KRAB domain; it reads VTFEDVAVYF…QKTNPCEICG (83 aa). The tract at residues 55 to 76 is disordered; that stretch reads GSGAGDEEAPYQQSTSPQRVSQ. The segment covering 65–75 has biased composition (polar residues); it reads YQQSTSPQRVS. C2H2-type zinc fingers lie at residues 90-112, 239-261, 267-289, 295-317, 323-345, 351-373, 379-401, 407-429, 435-457, 463-485, 491-513, 519-541, 547-569, 575-597, and 603-625; these read NPCEICGPVLRQILHLVEHQGTH, YMCSECGKSFSTSCSLSDHLRVH, YTCGECGKSYRQSSSLITHRRIH, HQCDECGKLFNRKYDLLIHQRVH, YKCSECGKSFSHSSSLITHQRIH, YECSECGKSFIHSSSLITHQRVH, YMCSECGKSFSQSCHLIKHRRLH, YECSECGKLFTYRSRFFQHQRVH, HECHECGKLFSRKFDLIVHERVH, YECSECGKSFTCKSYLISHWKVH, YECGECGKSFTHSSTLLQHQRVH, YECNECGKFFSQSSSLIRHRRSH, YECSECWKSFSNHSSLVKHRRVH, YECSECGKSFSQSSNLTNHQRIH, and YECSDCGKFFTFNSNLLKHQNVH.

Belongs to the krueppel C2H2-type zinc-finger protein family. Interacts with TRIM28.

The protein resides in the nucleus. Functionally, transcriptional repressor that plays a role in cell proliferation. Requires TRIM28 for its activity. The chain is Zinc finger protein 256 (ZNF256) from Homo sapiens (Human).